Consider the following 921-residue polypeptide: Valine--tRNA ligase (921 aa).

The 'HIGH' region motif lies at 40–50; the sequence is PNVTGSLHMGH. Positions 522 to 526 match the 'KMSKS' region motif; the sequence is KMSKS. Lysine 525 is an ATP binding site. The stretch at 849 to 921 forms a coiled coil; that stretch reads MADLIDKEAE…LQHKNRIESL (73 aa).

Belongs to the class-I aminoacyl-tRNA synthetase family. ValS type 1 subfamily. As to quaternary structure, monomer.

Its subcellular location is the cytoplasm. The enzyme catalyses tRNA(Val) + L-valine + ATP = L-valyl-tRNA(Val) + AMP + diphosphate. Catalyzes the attachment of valine to tRNA(Val). As ValRS can inadvertently accommodate and process structurally similar amino acids such as threonine, to avoid such errors, it has a 'posttransfer' editing activity that hydrolyzes mischarged Thr-tRNA(Val) in a tRNA-dependent manner. The polypeptide is Valine--tRNA ligase (Legionella pneumophila (strain Paris)).